We begin with the raw amino-acid sequence, 119 residues long: Flagellar transcriptional regulator FlhD (119 aa).

It belongs to the FlhD family. In terms of assembly, homodimer; disulfide-linked. Forms a heterohexamer composed of two FlhC and four FlhD subunits. Each FlhC binds a FlhD dimer, forming a heterotrimer, and a hexamer assembles by dimerization of two heterotrimers.

It is found in the cytoplasm. Functionally, functions in complex with FlhC as a master transcriptional regulator that regulates transcription of several flagellar and non-flagellar operons by binding to their promoter region. Activates expression of class 2 flagellar genes, including fliA, which is a flagellum-specific sigma factor that turns on the class 3 genes. Also regulates genes whose products function in a variety of physiological pathways. This is Flagellar transcriptional regulator FlhD from Yersinia enterocolitica.